The chain runs to 349 residues: MVQLQVFISGLLLLLPGAVASYTVVQGHSVTLPCIYSTTYRDEMVPTCWGRGECRSSYCTRSLIWTNGYKVTYQRSNRYQLKGNISEGNVSLTIENTVVSDSGPYCCIAEIPGAFYFVDYLLEVKAELPTSPPTRPTNTGRPTTTRPTNTGRPTTTRPTNTGRPTTTERPTTTGRPTTTERPTTTGRPTTISTRSTHVPTSTRVSTSTPPTPEQTQTHRSEATTYYPDQTTAEVTEAPSHTPTDWNNTATSSDDSWNSDTEAIPPQKLQRNPTKGFYVGMSFAALLLLLLASTVAITRYMVMRKNSGSLRFVAFPVSKIGASQNKVVEQARIEDEVYIIEDSPYFEEES.

An N-terminal signal peptide occupies residues 1–20 (MVQLQVFISGLLLLLPGAVA). Topologically, residues 21-275 (SYTVVQGHSV…QKLQRNPTKG (255 aa)) are extracellular. The 102-residue stretch at 22–123 (YTVVQGHSVT…AFYFVDYLLE (102 aa)) folds into the Ig-like V-type domain. 3 disulfide bridges follow: Cys34–Cys107, Cys48–Cys59, and Cys54–Cys106. Residues Asn84 and Asn89 are each glycosylated (N-linked (GlcNAc...) asparagine). Residues 128–271 (LPTSPPTRPT…AIPPQKLQRN (144 aa)) form a disordered region. Positions 136–215 (PTNTGRPTTT…TSTPPTPEQT (80 aa)) are enriched in low complexity. The span at 222-260 (ATTYYPDQTTAEVTEAPSHTPTDWNNTATSSDDSWNSDT) shows a compositional bias: polar residues. A helical transmembrane segment spans residues 276-296 (FYVGMSFAALLLLLLASTVAI). Residues 297-349 (TRYMVMRKNSGSLRFVAFPVSKIGASQNKVVEQARIEDEVYIIEDSPYFEEES) lie on the Cytoplasmic side of the membrane.

It belongs to the immunoglobulin superfamily. TIM family. In terms of assembly, homodimer.

It localises to the cell membrane. In terms of biological role, probable receptor for SEMA4A involved in the regulation of T-cell function. The interaction with SEMA4A enhances T-cell activation. This is T-cell immunoglobulin and mucin domain-containing protein 2 (Timd2) from Rattus norvegicus (Rat).